Here is a 626-residue protein sequence, read N- to C-terminus: Threonine--tRNA ligase (626 aa).

The tract at residues 1–144 is editing domain; the sequence is MRMLLIHADY…LSRTIVPEEG (144 aa). Residues 207 to 506 form a catalytic region; the sequence is PHVRLMLEHE…QAQGKKPMFP (300 aa). Cysteine 299, histidine 351, and histidine 475 together coordinate Zn(2+).

It belongs to the class-II aminoacyl-tRNA synthetase family. Homodimer. Requires Zn(2+) as cofactor.

Its subcellular location is the cytoplasm. It catalyses the reaction tRNA(Thr) + L-threonine + ATP = L-threonyl-tRNA(Thr) + AMP + diphosphate + H(+). Its function is as follows. Catalyzes the attachment of threonine to tRNA(Thr) in a two-step reaction: L-threonine is first activated by ATP to form Thr-AMP and then transferred to the acceptor end of tRNA(Thr). Also edits incorrectly charged L-seryl-tRNA(Thr). The protein is Threonine--tRNA ligase of Thermococcus gammatolerans (strain DSM 15229 / JCM 11827 / EJ3).